A 196-amino-acid polypeptide reads, in one-letter code: ATP-dependent Clp protease proteolytic subunit 1 (196 aa).

Serine 96 acts as the Nucleophile in catalysis. The active site involves histidine 121.

It belongs to the peptidase S14 family. As to quaternary structure, fourteen ClpP subunits assemble into 2 heptameric rings which stack back to back to give a disk-like structure with a central cavity, resembling the structure of eukaryotic proteasomes.

Its subcellular location is the cytoplasm. The enzyme catalyses Hydrolysis of proteins to small peptides in the presence of ATP and magnesium. alpha-casein is the usual test substrate. In the absence of ATP, only oligopeptides shorter than five residues are hydrolyzed (such as succinyl-Leu-Tyr-|-NHMec, and Leu-Tyr-Leu-|-Tyr-Trp, in which cleavage of the -Tyr-|-Leu- and -Tyr-|-Trp bonds also occurs).. Functionally, cleaves peptides in various proteins in a process that requires ATP hydrolysis. Has a chymotrypsin-like activity. Plays a major role in the degradation of misfolded proteins. In Prochlorococcus marinus (strain SARG / CCMP1375 / SS120), this protein is ATP-dependent Clp protease proteolytic subunit 1.